The primary structure comprises 86 residues: Large ribosomal subunit protein bL27 (86 aa).

The disordered stretch occupies residues 1–26; that stretch reads MATKKAGGSSRNGRDSAGRRLGIKKS.

This sequence belongs to the bacterial ribosomal protein bL27 family.

This is Large ribosomal subunit protein bL27 from Rickettsia typhi (strain ATCC VR-144 / Wilmington).